We begin with the raw amino-acid sequence, 85 residues long: Small ribosomal subunit protein uS17 (85 aa).

The protein belongs to the universal ribosomal protein uS17 family. As to quaternary structure, part of the 30S ribosomal subunit.

One of the primary rRNA binding proteins, it binds specifically to the 5'-end of 16S ribosomal RNA. The protein is Small ribosomal subunit protein uS17 of Mesoplasma florum (strain ATCC 33453 / NBRC 100688 / NCTC 11704 / L1) (Acholeplasma florum).